We begin with the raw amino-acid sequence, 339 residues long: DNA repair protein RAD51 homolog 1 (339 aa).

Residues 1–22 form a disordered region; that stretch reads MAMQMQLEASADTSVEEESFGP. N-acetylalanine is present on alanine 2. Residue threonine 13 is modified to Phosphothreonine. Serine 14 is subject to Phosphoserine. The region spanning 48-77 is the HhH domain; it reads TVEAVAYAPKKELINIKGISEAKADKILTE. Tyrosine 54 carries the phosphotyrosine; by ABL1 modification. Glycyl lysine isopeptide (Lys-Gly) (interchain with G-Cter in ubiquitin) cross-links involve residues lysine 58 and lysine 64. Residue 127 to 134 participates in ATP binding; sequence GEFRTGKT. Residues 184–257 are interaction with PALB2; sequence DVLDNVAYAR…FLRMLLRLAD (74 aa). Positions 245–260 match the Nuclear export signal; masked by the interaction with BRCA2 motif; the sequence is LARFLRMLLRLADEFG. Threonine 309 carries the phosphothreonine; by CHEK1 modification.

Belongs to the RecA family. RAD51 subfamily. As to quaternary structure, forms linear homooligomers, giving rise to a RAD51 nucleoprotein filament, which is essential for strand-pairing reactions during DNA recombination. Interacts with BRCA1 and either directly or indirectly with p53. Interacts with XRCC3, RAD54L and RAD54B. Interacts with the BCDX2 subcomplex RAD51C:RAD51B. Component of the homologous recombination repair (HR) complex composed of ERCC5/XPG, BRCA2, PALB2, DSS1 and RAD51. Interacts directly with PALB2 which may serve as a scaffold for a HR complex containing PALB2, BRCA2, RAD51C, RAD51 and XRCC3. Interacts with RAD51AP1 and RAD51AP2. Interacts with CHEK1, and this may require prior phosphorylation of CHEK1. Interacts with the MND1-PSMC3IP heterodimer. Found in a complex, at least composed of BLM, RAD51 and SPIDR; the complex formation is mediated by SPIDR. Interacts with SPIDR; the interaction is direct and recruits RAD51 to DNA damage sites. Interacts with FIGNL1 (via N-terminal one-half region); the interaction is direct. Interacts with RAD51AP1 (via C-terminal region); the interaction is direct. Interacts with NABP2, RPA1, PALB2 and RAD51. Interacts with SWI5/C9orf119, and at lower level with SFR1/MEIR5. Interacts with hyperphosphorylated RPA2; this interaction is necessary for efficient recruitment to chromatin in response to DNA damage. Interacts with SWSAP1; involved in homologous recombination repair. Interacts with PARPBP, BRCA2 and RECQL5; these interactions interfere with the formation of the RAD51-DNA homologous recombination structure. Interacts with POLQ; POLQ acts as an inhibitor of homology-recombination repair (HR) pathway by limiting RAD51 accumulation at resected ends. Interacts with POLN. Interacts with FBH1. Interacts with RFWD3. Interacts with the MCM8-MCM9 complex; the interaction recruits RAD51 to DNA damage sites. Component of a multiprotein complex with MEIOB and SPATA22. Interacts with the complex BRME1:HSF2BP:BRCA2. Interacts with HELQ; stimulating HELQ DNA helicase activity and ability to unwing DNA. Interacts with MMS22L; the interaction is direct and promotes recruitment of RAD51 to sites of DNA damage. Interacts with the ATAD5 RFC-like complex. Within the ATAD5 RFC-like complex, interacts with ATAD5 (via N-terminus); the interaction is direct and enhanced under replication stress. Interacts with WDR48; the interaction is enhanced under replication stress. Interacts with DNA helicase ZGRF1; the interaction promotes RAD51 strand exchange activity. Interacts (when phosphorylated) with TOPBP1; interaction takes place following phosphorylation by CK2 and PLK1 and promotes recruitment to DNA damage sites. Interacts with GRB2; this interaction inhibits RAD51 ATPase activity to stabilize RAD51 on stalled replication forks. In terms of processing, ubiquitinated by the SCF(FBH1) E3 ubiquitin ligase complex, regulating RAD51 subcellular location and preventing its association with DNA. Ubiquitinated by RFWD3 in response to DNA damage: ubiquitination leads to degradation by the proteasome, promoting homologous recombination. Phosphorylation of Thr-309 by CHEK1 may enhance association with chromatin at sites of DNA damage and promote DNA repair by homologous recombination. Phosphorylated at Ser-14 by PLK1, triggering phosphorylation at Thr-13 by CK2, thereby promoting interaction with TOPBP1 and recruitment to DNA damage sites during S-phase. Phosphorylation by ABL1 inhibits function. Expressed in the testes (at protein level). Expressed in the brain (at protein level). Expressed in the thymus, spleen, ovary and small intestine.

The protein localises to the nucleus. Its subcellular location is the cytoplasm. The protein resides in the perinuclear region. It is found in the mitochondrion matrix. It localises to the chromosome. The protein localises to the cytoskeleton. Its subcellular location is the microtubule organizing center. The protein resides in the centrosome. Plays an important role in homologous strand exchange, a key step in DNA repair through homologous recombination (HR). Binds to single-stranded DNA in an ATP-dependent manner to form nucleoprotein filaments which are essential for the homology search and strand exchange. Catalyzes the recognition of homology and strand exchange between homologous DNA partners to form a joint molecule between a processed DNA break and the repair template. Recruited to resolve stalled replication forks during replication stress. Part of a PALB2-scaffolded HR complex containing BRCA2 and RAD51C and which is thought to play a role in DNA repair by HR. Plays a role in regulating mitochondrial DNA copy number under conditions of oxidative stress in the presence of RAD51C and XRCC3. Also involved in interstrand cross-link repair. The polypeptide is DNA repair protein RAD51 homolog 1 (Mus musculus (Mouse)).